Here is a 330-residue protein sequence, read N- to C-terminus: Aspartate--ammonia ligase (330 aa).

It belongs to the class-II aminoacyl-tRNA synthetase family. AsnA subfamily.

It localises to the cytoplasm. It carries out the reaction L-aspartate + NH4(+) + ATP = L-asparagine + AMP + diphosphate + H(+). Its pathway is amino-acid biosynthesis; L-asparagine biosynthesis; L-asparagine from L-aspartate (ammonia route): step 1/1. In Escherichia fergusonii (strain ATCC 35469 / DSM 13698 / CCUG 18766 / IAM 14443 / JCM 21226 / LMG 7866 / NBRC 102419 / NCTC 12128 / CDC 0568-73), this protein is Aspartate--ammonia ligase.